A 387-amino-acid polypeptide reads, in one-letter code: 3-ketoacyl-CoA thiolase (387 aa).

Residue C91 is the Acyl-thioester intermediate of the active site. Catalysis depends on proton acceptor residues H343 and C373.

This sequence belongs to the thiolase-like superfamily. Thiolase family. In terms of assembly, heterotetramer of two alpha chains (FadB) and two beta chains (FadA).

The protein resides in the cytoplasm. The catalysed reaction is an acyl-CoA + acetyl-CoA = a 3-oxoacyl-CoA + CoA. Its pathway is lipid metabolism; fatty acid beta-oxidation. In terms of biological role, catalyzes the final step of fatty acid oxidation in which acetyl-CoA is released and the CoA ester of a fatty acid two carbons shorter is formed. In Salmonella choleraesuis (strain SC-B67), this protein is 3-ketoacyl-CoA thiolase.